Reading from the N-terminus, the 187-residue chain is UPF0200 protein PYRAB09750 (187 aa).

7–14 is a binding site for ATP; it reads GMPGSGKG.

This sequence belongs to the UPF0200 family.

The chain is UPF0200 protein PYRAB09750 from Pyrococcus abyssi (strain GE5 / Orsay).